Here is a 212-residue protein sequence, read N- to C-terminus: Small ribosomal subunit protein eS1 (212 aa).

The protein belongs to the eukaryotic ribosomal protein eS1 family.

The protein is Small ribosomal subunit protein eS1 of Ignicoccus hospitalis (strain KIN4/I / DSM 18386 / JCM 14125).